We begin with the raw amino-acid sequence, 405 residues long: Nicotinate phosphoribosyltransferase (405 aa).

The residue at position 224 (His-224) is a Phosphohistidine; by autocatalysis.

The protein belongs to the NAPRTase family. Transiently phosphorylated on a His residue during the reaction cycle. Phosphorylation strongly increases the affinity for substrates and increases the rate of nicotinate D-ribonucleotide production. Dephosphorylation regenerates the low-affinity form of the enzyme, leading to product release.

The catalysed reaction is nicotinate + 5-phospho-alpha-D-ribose 1-diphosphate + ATP + H2O = nicotinate beta-D-ribonucleotide + ADP + phosphate + diphosphate. Its pathway is cofactor biosynthesis; NAD(+) biosynthesis; nicotinate D-ribonucleotide from nicotinate: step 1/1. Functionally, catalyzes the synthesis of beta-nicotinate D-ribonucleotide from nicotinate and 5-phospho-D-ribose 1-phosphate at the expense of ATP. The sequence is that of Nicotinate phosphoribosyltransferase from Methanococcoides burtonii (strain DSM 6242 / NBRC 107633 / OCM 468 / ACE-M).